We begin with the raw amino-acid sequence, 647 residues long: Threonine--tRNA ligase (647 aa).

Residues 1–61 (MIKITFPDGA…EEDGSIEIVT (61 aa)) enclose the TGS domain. The segment at 240–538 (DHRKLGKELD…LIETYKGAFP (299 aa)) is catalytic. The Zn(2+) site is built by cysteine 334, histidine 385, and histidine 515.

It belongs to the class-II aminoacyl-tRNA synthetase family. As to quaternary structure, homodimer. It depends on Zn(2+) as a cofactor.

It localises to the cytoplasm. It carries out the reaction tRNA(Thr) + L-threonine + ATP = L-threonyl-tRNA(Thr) + AMP + diphosphate + H(+). Functionally, catalyzes the attachment of threonine to tRNA(Thr) in a two-step reaction: L-threonine is first activated by ATP to form Thr-AMP and then transferred to the acceptor end of tRNA(Thr). Also edits incorrectly charged L-seryl-tRNA(Thr). This Streptococcus pyogenes serotype M3 (strain ATCC BAA-595 / MGAS315) protein is Threonine--tRNA ligase.